We begin with the raw amino-acid sequence, 981 residues long: Mineralocorticoid receptor (981 aa).

Residues 1-603 (METKGYHSLP…STGSSRPSKI (603 aa)) form a modulating region. Positions 234 to 258 (SLTCSPSVENRGSRSHSPTHASNVG) are enriched in polar residues. 2 disordered regions span residues 234 to 331 (SLTC…ASTV) and 355 to 376 (AIQDVVPSPDTHEKGAHDVPFP). Residues Ser-250, Ser-259, Ser-283, Ser-287, and Ser-299 each carry the phosphoserine modification. Low complexity-rich tracts occupy residues 259–300 (SPLS…VSSP) and 309–327 (SVSSPSNNTNNRSTLSSPT). Zn(2+) contacts are provided by Cys-604, Cys-607, Cys-621, Cys-624, Cys-640, Cys-646, Cys-656, and Cys-659. NR C4-type zinc fingers lie at residues 604–624 (CLVCGDEASGCHYGVVTCGSC) and 640–664 (CAGRNDCIIDKIRRKNCPACRLQKC). A DNA-binding region (nuclear receptor) is located at residues 604-669 (CLVCGDEASG…RLQKCLQAGM (66 aa)). The tract at residues 670-722 (NLGARKSKKLGKLKGLHEEQPQQPPPPPPQSPEEGTTYIAPTKEPSVNSALVP) is hinge. Positions 684–710 (GLHEEQPQQPPPPPPQSPEEGTTYIAP) are disordered. Residues 691–700 (QQPPPPPPQS) are compositionally biased toward pro residues. The 239-residue stretch at 723 to 961 (QLTSITHALT…EFPAMLVEII (239 aa)) folds into the NR LBD domain. Asn-767 and Gln-773 together coordinate 21-hydroxyprogesterone. Aldosterone is bound by residues Asn-767 and Gln-773. The progesterone site is built by Asn-767 and Gln-773. An important for coactivator binding region spans residues 779 to 782 (KWAK). Arg-814 and Thr-942 together coordinate 21-hydroxyprogesterone. Residues Arg-814 and Thr-942 each coordinate aldosterone. Positions 814 and 942 each coordinate progesterone.

This sequence belongs to the nuclear hormone receptor family. NR3 subfamily. Heteromultimeric cytoplasmic complex with HSP90, HSP70, and FKBP4, in the absence of ligand. After ligand binding, it translocates to the nucleus and binds to DNA as a homodimer and as a heterodimer with NR3C1. Binds the coactivator NCOA2. May interact with HSD11B2 in the absence of ligand. Binds the coactivators NCOA1, TIF1 and NRIP1. Post-translationally, phosphorylated. Detected in liver, brain, heart, kidney, colon, aorta, hippocampus, hypothalamus and adrenal fasciculata.

The protein localises to the cytoplasm. It is found in the nucleus. It localises to the endoplasmic reticulum membrane. In terms of biological role, receptor for both mineralocorticoids (MC) such as aldosterone and glucocorticoids (GC) such as corticosterone or cortisol. Binds to mineralocorticoid response elements (MRE) and transactivates target genes. The effect of MC is to increase ion and water transport and thus raise extracellular fluid volume and blood pressure and lower potassium levels. This Rattus norvegicus (Rat) protein is Mineralocorticoid receptor (Nr3c2).